Consider the following 488-residue polypeptide: UDP-glycosyltransferase 85A3 (488 aa).

UDP-alpha-D-glucose-binding positions include Ser306, 363–365 (CPQ), 380–388 (HCGWNSTLE), and 402–405 (FAEQ).

It belongs to the UDP-glycosyltransferase family. In terms of tissue distribution, expressed in roots and flowers.

The chain is UDP-glycosyltransferase 85A3 (UGT85A3) from Arabidopsis thaliana (Mouse-ear cress).